We begin with the raw amino-acid sequence, 593 residues long: Methionine--tRNA ligase, mitochondrial (593 aa).

The transit peptide at 1 to 29 directs the protein to the mitochondrion; that stretch reads MLRTSVLRLLGRTGASRLSLLEDFGPRYY. Positions 52 to 62 match the 'HIGH' region motif; it reads FYVNAAPHIGH. The 'KMSKS' region motif lies at 347 to 351; sequence KMSKS. Lys-350 contacts ATP.

Belongs to the class-I aminoacyl-tRNA synthetase family.

It localises to the mitochondrion matrix. The enzyme catalyses tRNA(Met) + L-methionine + ATP = L-methionyl-tRNA(Met) + AMP + diphosphate. This is Methionine--tRNA ligase, mitochondrial (MARS2) from Homo sapiens (Human).